Here is a 242-residue protein sequence, read N- to C-terminus: Ribosomal RNA small subunit methyltransferase G (242 aa).

S-adenosyl-L-methionine contacts are provided by residues Gly78, Leu83, 130 to 131 (AE), and Arg151.

It belongs to the methyltransferase superfamily. RNA methyltransferase RsmG family.

It localises to the cytoplasm. Functionally, specifically methylates the N7 position of guanine in position 518 of 16S rRNA. This Salinispora tropica (strain ATCC BAA-916 / DSM 44818 / JCM 13857 / NBRC 105044 / CNB-440) protein is Ribosomal RNA small subunit methyltransferase G.